The sequence spans 100 residues: Large ribosomal subunit protein uL23 (100 aa).

It belongs to the universal ribosomal protein uL23 family. Part of the 50S ribosomal subunit. Contacts protein L29, and trigger factor when it is bound to the ribosome.

Functionally, one of the early assembly proteins it binds 23S rRNA. One of the proteins that surrounds the polypeptide exit tunnel on the outside of the ribosome. Forms the main docking site for trigger factor binding to the ribosome. This chain is Large ribosomal subunit protein uL23, found in Dechloromonas aromatica (strain RCB).